Here is a 650-residue protein sequence, read N- to C-terminus: Chaperone protein DnaK (650 aa).

Position 200 is a phosphothreonine; by autocatalysis (T200).

The protein belongs to the heat shock protein 70 family.

Acts as a chaperone. This chain is Chaperone protein DnaK, found in Burkholderia orbicola (strain MC0-3).